The primary structure comprises 283 residues: MKQYLELCRRIVSEGEWVANERTGKRCLTVINADLEYDVANNQFPLITTRKSYWKAAIAEFLGYIRGYDNAADFRALGTKTWDANANENAAWLANPHRRGVDDMGRVYGVQGRAWRKPNGETIDQLRKIVNNLTKGIDDRGEILTFFNPGEFDLGCLRPCMHTHTFSLVGDTLHLTSYQRSCDVPLGLNFNQIQVFTFLALMAQITGKKAGKAYHKIVNAHIYEDQLELMRDVQLKREPFPLPKLEINPDIKTLEDLETWVTMDDFKVVGYQSHEPIKYPFSV.

Arginine 22 lines the dUMP pocket. The active-site Nucleophile is cysteine 160. Residues 180 to 183 (RSCD), asparagine 191, and 221 to 223 (HIY) each bind dUMP. Aspartate 183 is a (6R)-5,10-methylene-5,6,7,8-tetrahydrofolate binding site. Serine 282 contributes to the (6R)-5,10-methylene-5,6,7,8-tetrahydrofolate binding site.

This sequence belongs to the thymidylate synthase family. Bacterial-type ThyA subfamily. In terms of assembly, homodimer.

The protein resides in the cytoplasm. It catalyses the reaction dUMP + (6R)-5,10-methylene-5,6,7,8-tetrahydrofolate = 7,8-dihydrofolate + dTMP. Its pathway is pyrimidine metabolism; dTTP biosynthesis. Catalyzes the reductive methylation of 2'-deoxyuridine-5'-monophosphate (dUMP) to 2'-deoxythymidine-5'-monophosphate (dTMP) while utilizing 5,10-methylenetetrahydrofolate (mTHF) as the methyl donor and reductant in the reaction, yielding dihydrofolate (DHF) as a by-product. This enzymatic reaction provides an intracellular de novo source of dTMP, an essential precursor for DNA biosynthesis. In Haemophilus influenzae (strain PittEE), this protein is Thymidylate synthase.